A 1117-amino-acid polypeptide reads, in one-letter code: WD repeat and HMG-box DNA-binding protein 1 (1117 aa).

WD repeat units lie at residues 11-50, 52-91, 93-131, 134-173, 184-223, 228-267, and 271-310; these read GHTE…DPKS, NVGE…GILT, FTTN…QQQT, GHDA…CAVS, VNAK…NPFD, SISQ…CMER, and EKGY…SGKV. Serine 333 and serine 377 each carry phosphoserine. Lysine 390 participates in a covalent cross-link: Glycyl lysine isopeptide (Lys-Gly) (interchain with G-Cter in SUMO2). An N6-acetyllysine modification is found at lysine 664. Residues 816–885 are disordered; it reads LAETQSEEEK…NLFQSANSSD (70 aa). Threonine 819 carries the post-translational modification Phosphothreonine. Position 821 is a phosphoserine (serine 821). Basic and acidic residues predominate over residues 861 to 872; that stretch reads DTVSEEKPESHN. Polar residues predominate over residues 873–885; it reads HGQNLFQSANSSD. A phosphoserine mark is found at serine 910 and serine 923. Positions 911–1005 are disordered; it reads SKEPAVSANS…AVCLQNSENQ (95 aa). Polar residues predominate over residues 917-943; sequence SANSTRSANILDSMNKSSRKSTSLNRM. Lysine 953 carries the post-translational modification N6-acetyllysine. Polar residues predominate over residues 962 to 974; sequence KQASAASYFQKRT. Basic and acidic residues predominate over residues 975–987; sequence PQADKTEEVKENP. Over residues 988–1004 the composition is skewed to polar residues; the sequence is KSSSSDAPAVCLQNSEN. The segment at residues 1004 to 1073 is a DNA-binding region (HMG box); it reads NQRPKTGFQM…SDGAEAKKRK (70 aa). Serine 1030 is modified (phosphoserine). The disordered stretch occupies residues 1054–1074; it reads WTNKAKGETASDGAEAKKRKR. Lysine 1116 participates in a covalent cross-link: Glycyl lysine isopeptide (Lys-Gly) (interchain with G-Cter in SUMO1); alternate. Lysine 1116 is covalently cross-linked (Glycyl lysine isopeptide (Lys-Gly) (interchain with G-Cter in SUMO2); alternate).

As to quaternary structure, trimer. Interacts with the polymerase alpha catalytic subunit POLA1. Interacts with MCM10. Interacts with DNA2. Interacts with CDC45 and GINS2 subunit of GINS complex; these interactions associate WDHD1 with the CMG helicase complex.

The protein localises to the nucleus. It localises to the nucleoplasm. In terms of biological role, core replisome component that acts as a replication initiation factor. Binds directly to the CMG complex and functions as a hub to recruit additional proteins to the replication fork. The protein is WD repeat and HMG-box DNA-binding protein 1 (Wdhd1) of Mus musculus (Mouse).